A 242-amino-acid polypeptide reads, in one-letter code: Probable 2-phosphosulfolactate phosphatase (242 aa).

Belongs to the ComB family. It depends on Mg(2+) as a cofactor.

The enzyme catalyses (2R)-O-phospho-3-sulfolactate + H2O = (2R)-3-sulfolactate + phosphate. The sequence is that of Probable 2-phosphosulfolactate phosphatase from Prochlorococcus marinus (strain NATL1A).